The primary structure comprises 271 residues: Fork head domain-containing protein FD5 (271 aa).

The segment at residues 12–103 (QKPPYSYISL…FDMFENGSLL (92 aa)) is a DNA-binding region (fork-head).

Expressed in early embryogenesis in 14 symmetrical pairs of segmentally arranged neuroblasts and in developing peripheral nervous system. Also, later in embryogenesis, in a cluster of cells in head region.

It localises to the nucleus. Functionally, involved in development during embryogenesis. In Drosophila melanogaster (Fruit fly), this protein is Fork head domain-containing protein FD5 (fd96Cb).